We begin with the raw amino-acid sequence, 593 residues long: MGEALRGLKRTIMCGESRENNIGQKVTVMGWVQRKRNLGGLIFVDLRDRTGIMQIVFGEEINKEAFEKSDNVKSEYCIAVTGEIVKRQSPNNDMETGAVELKGEDIKILSESETPPIYIKEGLDASENIRLKYRYLDLRRPDMQKIFMIRHKTCKVVRDFLDENGFLEMETPILTKSTPEGARDYLVPSRNYKGMFYALPQSPQIFKQLLMVSGYDKYFQITKCFRDEDLRANRQPEFTQIDMELSFVEEDDVIELNERLLAKVFKEVGGIDVKLPIERMPYKIAMEKYGSDKPDLRFGMEINDLTEAVKNSEFKVFKGAIEAGGSVRAIKAENCATMGRKQIDKLQDFVKTYKAKGLAWIAYKEDEIKSPIAKFLTEEEMKAILEKMDAKAGDLILIVADKNNVVFESLGALRLHIAKELDIINKNEFRFVWITEFPLLAYNEEEGRYQAEHHPFTAIMDEDIELLGTEPGKVRAKAYDIVLNGEELGGGSIRIHDSKFQEKMFSVLGFTKEKAWERFGFLLEAFKFGPPPHGGLAYGLDRMIMFLAGTENIKDVITFPKNQNAFCPLTEAPNVVDENQLEELGIKKIEKED.

Residue Glu-180 participates in L-aspartate binding. The tract at residues 204-207 (QIFK) is aspartate. Arg-226 contributes to the L-aspartate binding site. ATP-binding positions include 226-228 (RDE) and Gln-235. Position 453 (His-453) interacts with L-aspartate. Position 487 (Glu-487) interacts with ATP. Arg-494 is an L-aspartate binding site. ATP is bound at residue 539–542 (GLDR).

This sequence belongs to the class-II aminoacyl-tRNA synthetase family. Type 1 subfamily. As to quaternary structure, homodimer.

It localises to the cytoplasm. The catalysed reaction is tRNA(Asp) + L-aspartate + ATP = L-aspartyl-tRNA(Asp) + AMP + diphosphate. Functionally, catalyzes the attachment of L-aspartate to tRNA(Asp) in a two-step reaction: L-aspartate is first activated by ATP to form Asp-AMP and then transferred to the acceptor end of tRNA(Asp). The protein is Aspartate--tRNA ligase of Clostridium botulinum (strain ATCC 19397 / Type A).